The chain runs to 400 residues: Probable vacuolar protease A (400 aa).

The N-terminal stretch at 1–18 is a signal peptide; it reads MKGSLLLAGATLLGCTSA. Residues 19 to 72 constitute a propeptide, activation peptide; sequence KLHSLKLKKVSLKEQLEHADIDVQIKSLGQKYMGIRPEQHEQQMFKEQTPIEAE. The 311-residue stretch at 87–397 folds into the Peptidase A1 domain; sequence YFSEISIGTP…DLGKGTVGLA (311 aa). Asp-105 is an active-site residue. A disulfide bridge connects residues Cys-118 and Cys-123. N-linked (GlcNAc...) asparagine glycosylation occurs at Asn-140. Asp-289 is an active-site residue. Cys-323 and Cys-356 are oxidised to a cystine. Asn-340 carries an N-linked (GlcNAc...) asparagine glycan.

Belongs to the peptidase A1 family.

It is found in the vacuole lumen. The protein localises to the secreted. It carries out the reaction Hydrolysis of proteins with broad specificity for peptide bonds. Cleaves -Leu-Leu-|-Val-Tyr- bond in a synthetic substrate. Does not act on esters of Tyr or Arg.. Functionally, vacuolar aspartic endopeptidase which is probably also secreted and contributes to virulence. The protein is Probable vacuolar protease A (PEP2) of Trichophyton verrucosum (strain HKI 0517).